The chain runs to 226 residues: Large ribosomal subunit protein uL1 (226 aa).

It belongs to the universal ribosomal protein uL1 family. Part of the 50S ribosomal subunit.

Binds directly to 23S rRNA. The L1 stalk is quite mobile in the ribosome, and is involved in E site tRNA release. Functionally, protein L1 is also a translational repressor protein, it controls the translation of the L11 operon by binding to its mRNA. This chain is Large ribosomal subunit protein uL1, found in Borrelia garinii subsp. bavariensis (strain ATCC BAA-2496 / DSM 23469 / PBi) (Borreliella bavariensis).